The primary structure comprises 411 residues: Serine hydroxymethyltransferase (411 aa).

(6S)-5,6,7,8-tetrahydrofolate-binding positions include L117 and 121–123; that span reads GHL. N6-(pyridoxal phosphate)lysine is present on K226. (6S)-5,6,7,8-tetrahydrofolate-binding positions include E241 and 349-351; that span reads SPF.

It belongs to the SHMT family. As to quaternary structure, homodimer. Pyridoxal 5'-phosphate serves as cofactor.

The protein resides in the cytoplasm. The enzyme catalyses (6R)-5,10-methylene-5,6,7,8-tetrahydrofolate + glycine + H2O = (6S)-5,6,7,8-tetrahydrofolate + L-serine. Its pathway is one-carbon metabolism; tetrahydrofolate interconversion. It participates in amino-acid biosynthesis; glycine biosynthesis; glycine from L-serine: step 1/1. In terms of biological role, catalyzes the reversible interconversion of serine and glycine with tetrahydrofolate (THF) serving as the one-carbon carrier. This reaction serves as the major source of one-carbon groups required for the biosynthesis of purines, thymidylate, methionine, and other important biomolecules. Also exhibits THF-independent aldolase activity toward beta-hydroxyamino acids, producing glycine and aldehydes, via a retro-aldol mechanism. The sequence is that of Serine hydroxymethyltransferase from Macrococcus caseolyticus (strain JCSC5402) (Macrococcoides caseolyticum).